The primary structure comprises 218 residues: Glutathione S-transferase Mu 6 (218 aa).

Residues 1-88 (MPVTLGYWDI…YLGRKHNLCG (88 aa)) form the GST N-terminal domain. Glutathione is bound by residues 7–8 (YW), 46–50 (WLNDK), 59–60 (NL), and 72–73 (QS). A GST C-terminal domain is found at 90–208 (TEEERIRVDI…KTSRFLPSPV (119 aa)). Tyr116 is a substrate binding site.

Belongs to the GST superfamily. Mu family. In terms of assembly, homodimer. In terms of tissue distribution, expressed in liver, stomach and small intestine. Not expressed in spleen, kidney, colon, heart, muscle, brain or lung.

The protein resides in the cytoplasm. It carries out the reaction RX + glutathione = an S-substituted glutathione + a halide anion + H(+). Its function is as follows. Conjugation of reduced glutathione to a wide number of exogenous and endogenous hydrophobic electrophiles. The polypeptide is Glutathione S-transferase Mu 6 (Gstm6) (Mus musculus (Mouse)).